Here is a 193-residue protein sequence, read N- to C-terminus: MADVRTHAHQVQVHPLRQHEGGIKVVYPQSGPSSTQVLAVVAGVPVGGTLLTLAGLTLAVSVIGLILAFPLFLIFSPVIVPAAFVIGLAMTGFMASGAIGLTGLSSMSWVLNHIRRVRERIPDELDEAKQRLADMAEYAGQRTKDAGQTIEDKAHDVRESKTYDVRDRDTKGHTASGGDRDTKTTREVRVATT.

N-acetylalanine is present on Ala-2. Residues 2–39 form a polar region; the sequence is ADVRTHAHQVQVHPLRQHEGGIKVVYPQSGPSSTQVLA. 3 helical membrane passes run 37–57, 66–86, and 87–107; these read VLAVVAGVPVGGTLLTLAGLT, ILAFPLFLIFSPVIVPAAFVI, and GLAMTGFMASGAIGLTGLSSM. Residues 40–113 are hydrophobic; that stretch reads VVAGVPVGGT…LSSMSWVLNH (74 aa). Positions 139–193 are disordered; sequence AGQRTKDAGQTIEDKAHDVRESKTYDVRDRDTKGHTASGGDRDTKTTREVRVATT. Residues 142–193 are compositionally biased toward basic and acidic residues; the sequence is RTKDAGQTIEDKAHDVRESKTYDVRDRDTKGHTASGGDRDTKTTREVRVATT.

This sequence belongs to the oleosin family.

It is found in the lipid droplet. The protein localises to the membrane. May have a structural role to stabilize the lipid body during desiccation of the seed by preventing coalescence of the oil. Probably interacts with both lipid and phospholipid moieties of lipid bodies. May also provide recognition signals for specific lipase anchorage in lipolysis during seedling growth. This is Oleosin S1-2 (S1) from Brassica napus (Rape).